Reading from the N-terminus, the 253-residue chain is Imidazole glycerol phosphate synthase subunit HisF (253 aa).

Catalysis depends on residues Asp11 and Asp130.

It belongs to the HisA/HisF family. As to quaternary structure, heterodimer of HisH and HisF.

The protein localises to the cytoplasm. The enzyme catalyses 5-[(5-phospho-1-deoxy-D-ribulos-1-ylimino)methylamino]-1-(5-phospho-beta-D-ribosyl)imidazole-4-carboxamide + L-glutamine = D-erythro-1-(imidazol-4-yl)glycerol 3-phosphate + 5-amino-1-(5-phospho-beta-D-ribosyl)imidazole-4-carboxamide + L-glutamate + H(+). The protein operates within amino-acid biosynthesis; L-histidine biosynthesis; L-histidine from 5-phospho-alpha-D-ribose 1-diphosphate: step 5/9. In terms of biological role, IGPS catalyzes the conversion of PRFAR and glutamine to IGP, AICAR and glutamate. The HisF subunit catalyzes the cyclization activity that produces IGP and AICAR from PRFAR using the ammonia provided by the HisH subunit. This Geobacter sulfurreducens (strain ATCC 51573 / DSM 12127 / PCA) protein is Imidazole glycerol phosphate synthase subunit HisF.